The sequence spans 136 residues: Peptide methionine sulfoxide reductase B5 (136 aa).

Positions 14–135 constitute a MsrB domain; that stretch reads DEEWRAVLSP…NSVSIKFTPA (122 aa). Zn(2+) contacts are provided by C53, C56, C99, and C102. C71 and C124 are oxidised to a cystine. C124 (nucleophile) is an active-site residue.

The protein belongs to the MsrB Met sulfoxide reductase family. The cofactor is Zn(2+).

It localises to the cytoplasm. Its subcellular location is the cytosol. It catalyses the reaction L-methionyl-[protein] + [thioredoxin]-disulfide + H2O = L-methionyl-(R)-S-oxide-[protein] + [thioredoxin]-dithiol. Functionally, catalyzes the reduction of methionine sulfoxide (MetSO) to methionine in proteins. Plays a protective role against oxidative stress by restoring activity to proteins that have been inactivated by methionine oxidation. MSRB family specifically reduces the MetSO R-enantiomer. This is Peptide methionine sulfoxide reductase B5 (MSRB5) from Oryza sativa subsp. japonica (Rice).